The chain runs to 85 residues: Turripeptide PaIAa (85 aa).

The protein belongs to the turripeptide family. As to expression, expressed by the venom duct.

It localises to the secreted. Its function is as follows. Is lethal to drosophila larvae. This chain is Turripeptide PaIAa, found in Polystira albida (White giant-turris).